A 467-amino-acid polypeptide reads, in one-letter code: E3 ubiquitin-protein ligase TRIM11 (467 aa).

The RING-type zinc finger occupies 16 to 57 (CAICLDYFTDPVMTDCGHNFCRECIRRCWGQPEGPYACPECR). Ser85 is modified (phosphoserine). The B box-type zinc finger occupies 87–127 (VPQGVCAAHREPLTTFCGDDLSLLCPTCERSEHWAHRVRPL). Zn(2+) is bound by residues Cys92, His95, Cys114, and His119. The stretch at 127–207 (LQEAADDLKG…KLEEEELEVL (81 aa)) forms a coiled coil. The 194-residue stretch at 267–460 (ELRTVCRVPG…MTICRLIGVS (194 aa)) folds into the B30.2/SPRY domain. Residues 304 to 313 (DRRSVQRGEQ) show a composition bias toward basic and acidic residues. The tract at residues 304 to 325 (DRRSVQRGEQRQALPDSPERFD) is disordered.

It belongs to the TRIM/RBCC family. Binds cytoplasmic tail of integrin alpha-1. Interacts with the HN peptide. Interacts with PHOX2B. Interacts (when autoubiquitinated) with SQSTM1/p62; promoting AIM2 recruitment to autophagosomes. Interacts with AIM2; promoting its autophagy-dependent degradation. In terms of processing, autoubiquitinated upon DNA stimulation; autoubiquitination promotes interaction with SQSTM1/p62 and recruitment of AIM2 to autophagosomes.

The protein localises to the cytoplasm. It is found in the nucleus. It catalyses the reaction S-ubiquitinyl-[E2 ubiquitin-conjugating enzyme]-L-cysteine + [acceptor protein]-L-lysine = [E2 ubiquitin-conjugating enzyme]-L-cysteine + N(6)-ubiquitinyl-[acceptor protein]-L-lysine.. Its pathway is protein modification; protein ubiquitination. In terms of biological role, E3 ubiquitin-protein ligase that promotes the degradation of insoluble ubiquitinated proteins, including insoluble PAX6, poly-Gln repeat expanded HTT and poly-Ala repeat expanded ARX. Mediates PAX6 ubiquitination leading to proteasomal degradation, thereby modulating cortical neurogenesis. May also inhibit PAX6 transcriptional activity, possibly in part by preventing the binding of PAX6 to its consensus sequences. May contribute to the regulation of the intracellular level of HN (humanin) or HN-containing proteins through the proteasomal degradation pathway. Mediates MED15 ubiquitination leading to proteasomal degradation. May contribute to the innate restriction of retroviruses. Upon overexpression, reduces HIV-1 and murine leukemia virus infectivity, by suppressing viral gene expression. Antiviral activity depends on a functional E3 ubiquitin-protein ligase domain. May regulate TRIM5 turnover via the proteasome pathway, thus counteracting the TRIM5-mediated cross-species restriction of retroviral infection at early stages of the retroviral life cycle. Acts as an inhibitor of the AIM2 inflammasome by promoting autophagy-dependent degradation of AIM2. Mechanistically, undergoes autoubiquitination upon DNA stimulation, promoting interaction with AIM2 and SQSTM1/p62, leading to AIM2 recruitment to autophagosomes. The chain is E3 ubiquitin-protein ligase TRIM11 (Trim11) from Rattus norvegicus (Rat).